The following is a 470-amino-acid chain: 3-isopropylmalate dehydratase large subunit (470 aa).

Positions 346, 406, and 409 each coordinate [4Fe-4S] cluster.

Belongs to the aconitase/IPM isomerase family. LeuC type 1 subfamily. Heterodimer of LeuC and LeuD. Requires [4Fe-4S] cluster as cofactor.

It catalyses the reaction (2R,3S)-3-isopropylmalate = (2S)-2-isopropylmalate. The protein operates within amino-acid biosynthesis; L-leucine biosynthesis; L-leucine from 3-methyl-2-oxobutanoate: step 2/4. Functionally, catalyzes the isomerization between 2-isopropylmalate and 3-isopropylmalate, via the formation of 2-isopropylmaleate. This chain is 3-isopropylmalate dehydratase large subunit, found in Shouchella clausii (strain KSM-K16) (Alkalihalobacillus clausii).